A 166-amino-acid polypeptide reads, in one-letter code: MLRGVDEVAKELKVSKTAIYNKLKLKEFRRKVVKKQGKSMIDEELFNLIKDSLKVKNEVEYKDYIEESKDEVKSEIAMDREGSLNLNKSLIDTLIAQLEEKDKQIAELHKLIENNQVLLKKEQETKINILEFEDHFKEVDNKLSSIKEKMNQRKEKKSFFKNFFKK.

It to C.perfringens pCP13 PCP12.

This is an uncharacterized protein from Clostridium perfringens.